The chain runs to 293 residues: DNA-directed RNA polymerase III subunit RPC6 (293 aa).

The protein belongs to the eukaryotic RPC34/RPC39 RNA polymerase subunit family. Component of the RNA polymerase III (Pol III) complex consisting of 17 subunits.

The protein localises to the nucleus. In terms of biological role, DNA-dependent RNA polymerase catalyzes the transcription of DNA into RNA using the four ribonucleoside triphosphates as substrates. Specific peripheric component of RNA polymerase III which synthesizes small RNAs, such as 5S rRNA and tRNAs. The protein is DNA-directed RNA polymerase III subunit RPC6 of Drosophila melanogaster (Fruit fly).